We begin with the raw amino-acid sequence, 82 residues long: Toxin TdNa6 (82 aa).

A signal peptide spans 1–20; the sequence is MKGMIMLISCLMLIEVVVGG. The LCN-type CS-alpha/beta domain maps to 21-82; that stretch reads KEGYLLDRSN…KMWHLKTNKC (62 aa). Disulfide bonds link cysteine 32-cysteine 82, cysteine 36-cysteine 58, cysteine 44-cysteine 63, and cysteine 48-cysteine 65.

The protein belongs to the long (4 C-C) scorpion toxin superfamily. Sodium channel inhibitor family. Beta subfamily. In terms of tissue distribution, expressed by the venom gland.

It is found in the secreted. Its function is as follows. Beta toxins bind voltage-independently at site-4 of sodium channels (Nav) and shift the voltage of activation toward more negative potentials thereby affecting sodium channel activation and promoting spontaneous and repetitive firing. Is toxic to arthropods. The polypeptide is Toxin TdNa6 (Tityus discrepans (Venezuelan scorpion)).